The following is a 382-amino-acid chain: Putative glutamate--cysteine ligase 2-1 (382 aa).

This sequence belongs to the glutamate--cysteine ligase type 2 family. YbdK subfamily.

It carries out the reaction L-cysteine + L-glutamate + ATP = gamma-L-glutamyl-L-cysteine + ADP + phosphate + H(+). Its function is as follows. ATP-dependent carboxylate-amine ligase which exhibits weak glutamate--cysteine ligase activity. This Frankia casuarinae (strain DSM 45818 / CECT 9043 / HFP020203 / CcI3) protein is Putative glutamate--cysteine ligase 2-1.